The sequence spans 413 residues: MAGLAPEGSQFDARQYDAKMTELLGTEQEEFFTSYDEVYDSFDAMGLQENLLRGIYAYGFEKPSAIQQRGIVPFCKGLDVIQQAQSGTGKTATFCSGVLQQLDYSLVECQALVLAPTRELAQQIEKVMRALGDYLGVKVHACVGGTSVREDQRILQSGVHVVVGTPGRVFDMLRRQSLRPDHIKMFVLDEADEMLSRGFKDQIYDIFQLLPPKIQVGVFSATMPPEALEITRKFMNKPVRILVKRDDVTLEGIKQFYVNVDKEEWKLETLCDLYETLAITQSVIFVNTRRKVDWLTDKMRTRDHTVSATHGDMDQNTRDIIMREFRSGSSRVLITTDLLARGIDVQQVSLVINYDLPTQPENYLHRIGRSGRFGRKGVAINFVIKDDERMLSDIQRFYNVVIEELPANVADLL.

A Q motif motif is present at residues 40-68 (DSFDAMGLQENLLRGIYAYGFEKPSAIQQ). Positions 71–241 (IVPFCKGLDV…RKFMNKPVRI (171 aa)) constitute a Helicase ATP-binding domain. An ATP-binding site is contributed by 84-91 (AQSGTGKT). The DEAD box motif lies at 189–192 (DEAD). Positions 252–413 (GIKQFYVNVD…ELPANVADLL (162 aa)) constitute a Helicase C-terminal domain.

This sequence belongs to the DEAD box helicase family. eIF4A subfamily. EIF4F is a multi-subunit complex, the composition of which varies with external and internal environmental conditions. It is composed of at least EIF4A, EIF4E and EIF4G.

It catalyses the reaction ATP + H2O = ADP + phosphate + H(+). ATP-dependent RNA helicase which is a subunit of the eIF4F complex involved in cap recognition and is required for mRNA binding to ribosome. In the current model of translation initiation, eIF4A unwinds RNA secondary structures in the 5'-UTR of mRNAs which is necessary to allow efficient binding of the small ribosomal subunit, and subsequent scanning for the initiator codon. This is Eukaryotic initiation factor 4A-7 from Nicotiana tabacum (Common tobacco).